Reading from the N-terminus, the 362-residue chain is 3-isopropylmalate dehydrogenase (362 aa).

An NAD(+)-binding site is contributed by 77 to 88 (GPKWGTGSVRPE). Substrate-binding residues include Arg95, Arg105, Arg134, and Asp223. Residues Asp223, Asp248, and Asp252 each coordinate Mg(2+). An NAD(+)-binding site is contributed by 287–298 (GSAPDLPKGKVN).

It belongs to the isocitrate and isopropylmalate dehydrogenases family. As to quaternary structure, homodimer. Mg(2+) is required as a cofactor. Mn(2+) serves as cofactor.

It localises to the cytoplasm. It catalyses the reaction (2R,3S)-3-isopropylmalate + NAD(+) = 4-methyl-2-oxopentanoate + CO2 + NADH. It participates in amino-acid biosynthesis; L-leucine biosynthesis; L-leucine from 3-methyl-2-oxobutanoate: step 3/4. Its function is as follows. Catalyzes the oxidation of 3-carboxy-2-hydroxy-4-methylpentanoate (3-isopropylmalate) to 3-carboxy-4-methyl-2-oxopentanoate. The product decarboxylates to 4-methyl-2 oxopentanoate. In Zygosaccharomyces rouxii (strain ATCC 2623 / CBS 732 / NBRC 1130 / NCYC 568 / NRRL Y-229), this protein is 3-isopropylmalate dehydrogenase (LEU2).